The chain runs to 403 residues: S-adenosylmethionine synthase (403 aa).

Residue histidine 17 coordinates ATP. Aspartate 19 contacts Mg(2+). Glutamate 45 lines the K(+) pocket. Positions 58 and 104 each coordinate L-methionine. Positions glutamine 104–threonine 114 are flexible loop. ATP-binding positions include aspartate 179–lysine 181, lysine 250–phenylalanine 251, aspartate 259, arginine 265–lysine 266, alanine 282, and lysine 286. An L-methionine-binding site is contributed by aspartate 259. Residue lysine 290 participates in L-methionine binding.

Belongs to the AdoMet synthase family. Homotetramer; dimer of dimers. Mg(2+) is required as a cofactor. The cofactor is K(+).

It localises to the cytoplasm. It carries out the reaction L-methionine + ATP + H2O = S-adenosyl-L-methionine + phosphate + diphosphate. It participates in amino-acid biosynthesis; S-adenosyl-L-methionine biosynthesis; S-adenosyl-L-methionine from L-methionine: step 1/1. Functionally, catalyzes the formation of S-adenosylmethionine (AdoMet) from methionine and ATP. The overall synthetic reaction is composed of two sequential steps, AdoMet formation and the subsequent tripolyphosphate hydrolysis which occurs prior to release of AdoMet from the enzyme. The sequence is that of S-adenosylmethionine synthase from Mycobacterium marinum (strain ATCC BAA-535 / M).